A 127-amino-acid chain; its full sequence is Small ribosomal subunit protein uS17m (127 aa).

It belongs to the universal ribosomal protein uS17 family.

The protein localises to the mitochondrion. The protein is Small ribosomal subunit protein uS17m (mrps17) of Dictyostelium discoideum (Social amoeba).